The primary structure comprises 281 residues: Small ribosomal subunit protein uS2 (281 aa).

A disordered region spans residues 229–281 (RSGANKTEGEAAEQPMAAWEKELLTNEAPAEASAEAAAPAAAEGETAEAPKAE). Residues 255 to 275 (EAPAEASAEAAAPAAAEGETA) show a composition bias toward low complexity.

Belongs to the universal ribosomal protein uS2 family.

This is Small ribosomal subunit protein uS2 from Bifidobacterium longum subsp. infantis (strain ATCC 15697 / DSM 20088 / JCM 1222 / NCTC 11817 / S12).